Reading from the N-terminus, the 242-residue chain is Biosynthetic peptidoglycan transglycosylase (242 aa).

A helical membrane pass occupies residues 19 to 39 (LMVVLAVFWGGGIALFSVAPV).

Belongs to the glycosyltransferase 51 family.

Its subcellular location is the cell inner membrane. The enzyme catalyses [GlcNAc-(1-&gt;4)-Mur2Ac(oyl-L-Ala-gamma-D-Glu-L-Lys-D-Ala-D-Ala)](n)-di-trans,octa-cis-undecaprenyl diphosphate + beta-D-GlcNAc-(1-&gt;4)-Mur2Ac(oyl-L-Ala-gamma-D-Glu-L-Lys-D-Ala-D-Ala)-di-trans,octa-cis-undecaprenyl diphosphate = [GlcNAc-(1-&gt;4)-Mur2Ac(oyl-L-Ala-gamma-D-Glu-L-Lys-D-Ala-D-Ala)](n+1)-di-trans,octa-cis-undecaprenyl diphosphate + di-trans,octa-cis-undecaprenyl diphosphate + H(+). It participates in cell wall biogenesis; peptidoglycan biosynthesis. In terms of biological role, peptidoglycan polymerase that catalyzes glycan chain elongation from lipid-linked precursors. This is Biosynthetic peptidoglycan transglycosylase from Escherichia coli O157:H7.